Here is a 633-residue protein sequence, read N- to C-terminus: Sodium- and chloride-dependent glycine transporter 1 (633 aa).

Residues 1–30 are Cytoplasmic-facing; that stretch reads MGLCVNGAVPSEATKKDENLKRGNWGNQIE. 3 consecutive transmembrane segments (helical) span residues 31–51, 58–78, and 113–133; these read FVLT…FPYL, GAFM…LFFM, and YIGI…FASM. Residues 134–208 lie on the Extracellular side of the membrane; that stretch reads NRVLPWTYCN…ISEDIGDFGE (75 aa). 4 N-linked (GlcNAc...) asparagine glycosylation sites follow: asparagine 158, asparagine 164, asparagine 173, and asparagine 179. The next 9 membrane-spanning stretches (helical) occupy residues 209–229, 238–258, 283–303, 330–350, 373–393, 429–449, 453–473, 493–513, and 533–553; these read VQLP…LCLI, VVYF…IRGI, VWGD…GGLI, SVYA…HLGV, LLPI…LLGL, IIGF…WLLL, YAAS…VMYI, LFFQ…ILIF, and ITIG…YAIF. Residues 554 to 633 are Cytoplasmic-facing; it reads KIWCSEGDTF…GQAHTQDSKV (80 aa). Residues 588–633 form a disordered region; the sequence is RYAQMSSTRSESNPEAQPLNPEKMKEDLSLTIQGSNGQAHTQDSKV. 2 stretches are compositionally biased toward polar residues: residues 591-602 and 617-633; these read QMSSTRSESNPE and LTIQ…DSKV.

The protein belongs to the sodium:neurotransmitter symporter (SNF) (TC 2.A.22) family. SLC6A9 subfamily. First expressed in early tailbud stage embryos in the midbrain and anterior spinal cord, and weakly in the hindbrain. By late tailbud stages, expression extends posteriorly in the spinal cord to appear in between somites. Expressed in the forebrain, retina, between the somites and in the blood islands by the swimming tadpole stages.

The protein resides in the cell membrane. The catalysed reaction is glycine(out) + chloride(out) + 2 Na(+)(out) = glycine(in) + chloride(in) + 2 Na(+)(in). Its function is as follows. Sodium- and chloride-dependent glycine transporter which is essential for regulating glycine concentrations at inhibitory glycinergic synapses. This Xenopus laevis (African clawed frog) protein is Sodium- and chloride-dependent glycine transporter 1.